Here is an 89-residue protein sequence, read N- to C-terminus: Small ribosomal subunit protein uS15 (89 aa).

It belongs to the universal ribosomal protein uS15 family. In terms of assembly, part of the 30S ribosomal subunit. Forms a bridge to the 50S subunit in the 70S ribosome, contacting the 23S rRNA.

Functionally, one of the primary rRNA binding proteins, it binds directly to 16S rRNA where it helps nucleate assembly of the platform of the 30S subunit by binding and bridging several RNA helices of the 16S rRNA. Forms an intersubunit bridge (bridge B4) with the 23S rRNA of the 50S subunit in the ribosome. In Pseudomonas putida (Arthrobacter siderocapsulatus), this protein is Small ribosomal subunit protein uS15.